Consider the following 117-residue polypeptide: DNA-directed RNA polymerase subunit omega (117 aa).

This sequence belongs to the RNA polymerase subunit omega family. As to quaternary structure, the RNAP catalytic core consists of 2 alpha, 1 beta, 1 beta' and 1 omega subunit. When a sigma factor is associated with the core the holoenzyme is formed, which can initiate transcription.

The catalysed reaction is RNA(n) + a ribonucleoside 5'-triphosphate = RNA(n+1) + diphosphate. Functionally, promotes RNA polymerase assembly. Latches the N- and C-terminal regions of the beta' subunit thereby facilitating its interaction with the beta and alpha subunits. This chain is DNA-directed RNA polymerase subunit omega, found in Ruegeria pomeroyi (strain ATCC 700808 / DSM 15171 / DSS-3) (Silicibacter pomeroyi).